The sequence spans 631 residues: Chaperone protein DnaK (631 aa).

At threonine 197 the chain carries Phosphothreonine; by autocatalysis. The tract at residues 599–631 is disordered; that stretch reads AQSDAGAAGSASEENTTSNEKVVDADFEDVEKK. Residues 603–612 show a composition bias toward low complexity; sequence AGAAGSASEE.

The protein belongs to the heat shock protein 70 family.

Its function is as follows. Acts as a chaperone. In Rickettsia bellii (strain RML369-C), this protein is Chaperone protein DnaK.